The sequence spans 268 residues: Putative carbamate hydrolase RutD (268 aa).

The 105-residue stretch at Pro15–Ser119 folds into the AB hydrolase-1 domain.

The protein belongs to the AB hydrolase superfamily. Hydrolase RutD family.

The enzyme catalyses carbamate + 2 H(+) = NH4(+) + CO2. Involved in pyrimidine catabolism. May facilitate the hydrolysis of carbamate, a reaction that can also occur spontaneously. In Cronobacter sakazakii (strain ATCC BAA-894) (Enterobacter sakazakii), this protein is Putative carbamate hydrolase RutD.